The sequence spans 386 residues: 8-amino-7-oxononanoate synthase (386 aa).

Residue Arg-26 participates in substrate binding. Residue 104–105 participates in pyridoxal 5'-phosphate binding; it reads GY. Residue His-129 coordinates substrate. Pyridoxal 5'-phosphate contacts are provided by Ser-176, His-204, and Thr-232. Position 235 is an N6-(pyridoxal phosphate)lysine (Lys-235). Thr-349 is a binding site for substrate.

The protein belongs to the class-II pyridoxal-phosphate-dependent aminotransferase family. BioF subfamily. Homodimer. It depends on pyridoxal 5'-phosphate as a cofactor.

It carries out the reaction 6-carboxyhexanoyl-[ACP] + L-alanine + H(+) = (8S)-8-amino-7-oxononanoate + holo-[ACP] + CO2. It functions in the pathway cofactor biosynthesis; biotin biosynthesis. In terms of biological role, catalyzes the decarboxylative condensation of pimeloyl-[acyl-carrier protein] and L-alanine to produce 8-amino-7-oxononanoate (AON), [acyl-carrier protein], and carbon dioxide. This is 8-amino-7-oxononanoate synthase from Chromohalobacter salexigens (strain ATCC BAA-138 / DSM 3043 / CIP 106854 / NCIMB 13768 / 1H11).